The following is a 610-amino-acid chain: Chaperone protein DnaK (610 aa).

Position 173 is a phosphothreonine; by autocatalysis (T173). 2 disordered regions span residues 525-544 (ENIG…ALKT) and 576-610 (AAQQ…DDKK). The span at 529–542 (EEDKKSAEEKKDAL) shows a compositional bias: basic and acidic residues. Over residues 576–592 (AAQQQQQAQGANAGQNN) the composition is skewed to low complexity. The segment covering 599-610 (AEFKEVKDDDKK) has biased composition (basic and acidic residues).

This sequence belongs to the heat shock protein 70 family.

Functionally, acts as a chaperone. In Staphylococcus aureus (strain Mu3 / ATCC 700698), this protein is Chaperone protein DnaK.